The following is a 486-amino-acid chain: Kynureninase 1 (486 aa).

Residues 53 to 72 (DLKRTTLDPNQEPEHSPTPS) form a disordered region. Pyridoxal 5'-phosphate is bound by residues Leu146, Thr147, 174-177 (FPSD), Ser231, Asp260, His263, and Tyr285. Position 286 is an N6-(pyridoxal phosphate)lysine (Lys286). 2 residues coordinate pyridoxal 5'-phosphate: Trp326 and Asn354.

The protein belongs to the kynureninase family. Homodimer. It depends on pyridoxal 5'-phosphate as a cofactor.

The protein resides in the cytoplasm. The catalysed reaction is L-kynurenine + H2O = anthranilate + L-alanine + H(+). It catalyses the reaction 3-hydroxy-L-kynurenine + H2O = 3-hydroxyanthranilate + L-alanine + H(+). It functions in the pathway amino-acid degradation; L-kynurenine degradation; L-alanine and anthranilate from L-kynurenine: step 1/1. The protein operates within cofactor biosynthesis; NAD(+) biosynthesis; quinolinate from L-kynurenine: step 2/3. In terms of biological role, catalyzes the cleavage of L-kynurenine (L-Kyn) and L-3-hydroxykynurenine (L-3OHKyn) into anthranilic acid (AA) and 3-hydroxyanthranilic acid (3-OHAA), respectively. This chain is Kynureninase 1 (bna5-1), found in Aspergillus clavatus (strain ATCC 1007 / CBS 513.65 / DSM 816 / NCTC 3887 / NRRL 1 / QM 1276 / 107).